A 236-amino-acid chain; its full sequence is Reticulon-3 (236 aa).

The span at 1 to 24 (MAEPSAATQSPSISSSSSGAEPSA) shows a compositional bias: low complexity. The disordered stretch occupies residues 1–31 (MAEPSAATQSPSISSSSSGAEPSAPGGGGSP). Ala2 bears the N-acetylalanine mark. Residues 2 to 67 (AEPSAATQSP…KKTGFVFGTT (66 aa)) are Cytoplasmic-facing. A Phosphoserine modification is found at Ser30. One can recognise a Reticulon domain in the interval 48-236 (VHDLIFWRDV…LPGIAKKKAE (189 aa)). The helical intramembrane region spans 68 to 91 (LIMLLSLAAFSVISVVSYLILALL). Topologically, residues 92 to 151 (SVTISFRIYKSVIQAVQKSEEGHPFKAYLDVDITLSSEAFHNYMNAAMVHINRALKLIIR) are cytoplasmic. Positions 152–172 (LFLVEDLVDSLKLAVFMWLMT) form an intramembrane region, helical. Residues 173 to 176 (YVGA) lie on the Cytoplasmic side of the membrane. Residues 177–197 (VFNGITLLILAELLIFSVPIV) constitute an intramembrane region (helical). The tract at residues 191–236 (IFSVPIVYEKYKTQIDHYVGIARDQTKSIVEKIQAKLPGIAKKKAE) is interaction with FADD. Topologically, residues 198–236 (YEKYKTQIDHYVGIARDQTKSIVEKIQAKLPGIAKKKAE) are cytoplasmic. An interaction with BACE1 region spans residues 204 to 206 (QID).

Homodimer. Interacts with RTN4. Interacts with BACE1, BACE2, BCL2 and FADD. Interacts with ATL1 and ATL2. Interacts with TMEM33. Interacts with ZFYVE27 and with KIF5A in a ZFYVE27-dependent manner. Interacts with RIGI. Interacts with TRIM25.

The protein resides in the endoplasmic reticulum membrane. Its subcellular location is the golgi apparatus membrane. Its function is as follows. May be involved in membrane trafficking in the early secretory pathway. Inhibits BACE1 activity and amyloid precursor protein processing. May induce caspase-8 cascade and apoptosis. May favor BCL2 translocation to the mitochondria upon endoplasmic reticulum stress. Induces the formation of endoplasmic reticulum tubules. Acts also as an inflammation-resolving regulator by interacting with both TRIM25 and RIGI, subsequently impairing RIGI 'Lys-63'-linked polyubiquitination leading to IRF3 and NF-kappa-B inhibition. In Pongo abelii (Sumatran orangutan), this protein is Reticulon-3 (RTN3).